A 131-amino-acid polypeptide reads, in one-letter code: Large ribosomal subunit protein bL17 (131 aa).

The protein belongs to the bacterial ribosomal protein bL17 family. As to quaternary structure, part of the 50S ribosomal subunit. Contacts protein L32.

In Shewanella frigidimarina (strain NCIMB 400), this protein is Large ribosomal subunit protein bL17.